The primary structure comprises 249 residues: Homeobox-leucine zipper protein HOX6 (249 aa).

Residues 1 to 32 form a disordered region; sequence MDGEEDSEWMMMDVGGKGGKGGGGGGAADRKK. A compositionally biased stretch (gly residues) spans 15-27; the sequence is GGKGGKGGGGGGA. A DNA-binding region (homeobox) is located at residues 27–86; it reads AADRKKRFSEEQIKSLESMFATQTKLEPRQKLQLARELGLQPRQVAIWFQNKRARWKSKQ. The tract at residues 85-129 is leucine-zipper; sequence KQLEREYSALRDDYDALLCSYESLKKEKLALIKQLEKLAEMLQEP. Residues 194-249 form a disordered region; that stretch reads FLRPSSQHHPPPPHAGAGFTSSEPAADHQSFNFHSSWPSSTEQTCSSTPWWEFESE. Positions 212-242 are enriched in polar residues; that stretch reads FTSSEPAADHQSFNFHSSWPSSTEQTCSSTP.

It belongs to the HD-ZIP homeobox family. Class I subfamily. In terms of tissue distribution, expressed in seedlings, roots, leaves, nodes, internodes, flowers and embryo.

The protein resides in the nucleus. Functionally, probable transcription factor that binds to the DNA sequence 5'-CAAT[AT]ATTG-3'. In Oryza sativa subsp. indica (Rice), this protein is Homeobox-leucine zipper protein HOX6 (HOX6).